The following is a 559-amino-acid chain: DNA ligase (559 aa).

Residue E247 coordinates ATP. The N6-AMP-lysine intermediate role is filled by K249. Residues R254, R269, E299, F339, R414, and K420 each contribute to the ATP site.

This sequence belongs to the ATP-dependent DNA ligase family. Mg(2+) serves as cofactor.

The catalysed reaction is ATP + (deoxyribonucleotide)n-3'-hydroxyl + 5'-phospho-(deoxyribonucleotide)m = (deoxyribonucleotide)n+m + AMP + diphosphate.. Functionally, DNA ligase that seals nicks in double-stranded DNA during DNA replication, DNA recombination and DNA repair. The chain is DNA ligase from Pyrococcus abyssi (strain GE5 / Orsay).